A 35-amino-acid chain; its full sequence is Photosystem II reaction center protein T (35 aa).

The helical transmembrane segment at 3-23 (ALVYTFLLVSTLGIIFFAIFF) threads the bilayer.

It belongs to the PsbT family. In terms of assembly, PSII is composed of 1 copy each of membrane proteins PsbA, PsbB, PsbC, PsbD, PsbE, PsbF, PsbH, PsbI, PsbJ, PsbK, PsbL, PsbM, PsbT, PsbY, PsbZ, Psb30/Ycf12, at least 3 peripheral proteins of the oxygen-evolving complex and a large number of cofactors. It forms dimeric complexes.

The protein localises to the plastid. Its subcellular location is the chloroplast thylakoid membrane. In terms of biological role, found at the monomer-monomer interface of the photosystem II (PS II) dimer, plays a role in assembly and dimerization of PSII. PSII is a light-driven water plastoquinone oxidoreductase, using light energy to abstract electrons from H(2)O, generating a proton gradient subsequently used for ATP formation. This is Photosystem II reaction center protein T from Pinus thunbergii (Japanese black pine).